Here is a 480-residue protein sequence, read N- to C-terminus: Protein nucleotidyltransferase YdiU (480 aa).

Positions 86, 88, 89, 109, 121, 122, 172, and 179 each coordinate ATP. Asp248 (proton acceptor) is an active-site residue. Mg(2+) contacts are provided by Asn249 and Asp258. Residue Asp258 participates in ATP binding.

The protein belongs to the SELO family. Mg(2+) is required as a cofactor. The cofactor is Mn(2+).

The catalysed reaction is L-seryl-[protein] + ATP = 3-O-(5'-adenylyl)-L-seryl-[protein] + diphosphate. It carries out the reaction L-threonyl-[protein] + ATP = 3-O-(5'-adenylyl)-L-threonyl-[protein] + diphosphate. It catalyses the reaction L-tyrosyl-[protein] + ATP = O-(5'-adenylyl)-L-tyrosyl-[protein] + diphosphate. The enzyme catalyses L-histidyl-[protein] + UTP = N(tele)-(5'-uridylyl)-L-histidyl-[protein] + diphosphate. The catalysed reaction is L-seryl-[protein] + UTP = O-(5'-uridylyl)-L-seryl-[protein] + diphosphate. It carries out the reaction L-tyrosyl-[protein] + UTP = O-(5'-uridylyl)-L-tyrosyl-[protein] + diphosphate. Nucleotidyltransferase involved in the post-translational modification of proteins. It can catalyze the addition of adenosine monophosphate (AMP) or uridine monophosphate (UMP) to a protein, resulting in modifications known as AMPylation and UMPylation. The polypeptide is Protein nucleotidyltransferase YdiU (Klebsiella pneumoniae subsp. pneumoniae (strain ATCC 700721 / MGH 78578)).